A 351-amino-acid polypeptide reads, in one-letter code: sn-glycerol-3-phosphate import ATP-binding protein UgpC (351 aa).

Residues 4–234 (ITLDNLVKAY…PATTFVAGFI (231 aa)) enclose the ABC transporter domain. Position 36–43 (36–43 (GPSGCGKS)) interacts with ATP.

The protein belongs to the ABC transporter superfamily. sn-glycerol-3-phosphate importer (TC 3.A.1.1.3) family. The complex is composed of two ATP-binding proteins (UgpC), two transmembrane proteins (UgpA and UgpE) and a solute-binding protein (UgpB).

The protein resides in the cell inner membrane. It catalyses the reaction sn-glycerol 3-phosphate(out) + ATP + H2O = sn-glycerol 3-phosphate(in) + ADP + phosphate + H(+). Its function is as follows. Part of the ABC transporter complex UgpBAEC involved in sn-glycerol-3-phosphate (G3P) import. Responsible for energy coupling to the transport system. This Ruegeria pomeroyi (strain ATCC 700808 / DSM 15171 / DSS-3) (Silicibacter pomeroyi) protein is sn-glycerol-3-phosphate import ATP-binding protein UgpC.